A 136-amino-acid polypeptide reads, in one-letter code: Transcription antitermination protein NusB (136 aa).

Belongs to the NusB family.

In terms of biological role, involved in transcription antitermination. Required for transcription of ribosomal RNA (rRNA) genes. Binds specifically to the boxA antiterminator sequence of the ribosomal RNA (rrn) operons. This chain is Transcription antitermination protein NusB, found in Salinispora arenicola (strain CNS-205).